The chain runs to 413 residues: 1-deoxy-D-xylulose 5-phosphate reductoisomerase (413 aa).

The NADPH site is built by threonine 21, glycine 22, serine 23, isoleucine 24, glycine 47, and asparagine 127. Lysine 128 contacts 1-deoxy-D-xylulose 5-phosphate. Residue glutamate 129 participates in NADPH binding. Aspartate 151 is a Mn(2+) binding site. 1-deoxy-D-xylulose 5-phosphate-binding residues include serine 152, glutamate 153, serine 177, and histidine 200. Glutamate 153 is a binding site for Mn(2+). Residue glycine 206 coordinates NADPH. 4 residues coordinate 1-deoxy-D-xylulose 5-phosphate: serine 213, asparagine 218, lysine 219, and glutamate 222. Residue glutamate 222 participates in Mn(2+) binding.

It belongs to the DXR family. Mg(2+) is required as a cofactor. Mn(2+) serves as cofactor.

It carries out the reaction 2-C-methyl-D-erythritol 4-phosphate + NADP(+) = 1-deoxy-D-xylulose 5-phosphate + NADPH + H(+). It participates in isoprenoid biosynthesis; isopentenyl diphosphate biosynthesis via DXP pathway; isopentenyl diphosphate from 1-deoxy-D-xylulose 5-phosphate: step 1/6. Functionally, catalyzes the NADPH-dependent rearrangement and reduction of 1-deoxy-D-xylulose-5-phosphate (DXP) to 2-C-methyl-D-erythritol 4-phosphate (MEP). The protein is 1-deoxy-D-xylulose 5-phosphate reductoisomerase of Mycobacterium bovis (strain ATCC BAA-935 / AF2122/97).